A 33-amino-acid chain; its full sequence is Photosystem II reaction center protein Psb30 (33 aa).

Residues I5–L25 form a helical membrane-spanning segment.

It belongs to the Psb30/Ycf12 family. As to quaternary structure, PSII is composed of 1 copy each of membrane proteins PsbA, PsbB, PsbC, PsbD, PsbE, PsbF, PsbH, PsbI, PsbJ, PsbK, PsbL, PsbM, PsbT, PsbX, PsbY, PsbZ, Psb30/Ycf12, peripheral proteins of the oxygen-evolving complex and a large number of cofactors. It forms dimeric complexes.

Its subcellular location is the plastid. The protein resides in the chloroplast thylakoid membrane. Functionally, a core subunit of photosystem II (PSII), probably helps stabilize the reaction center. In Chlorella vulgaris (Green alga), this protein is Photosystem II reaction center protein Psb30.